Reading from the N-terminus, the 411-residue chain is Lissencephaly-1 homolog (411 aa).

One can recognise a LisH domain in the interval 7–39 (QREELNKAIADYLASNGFMEALESFKKETDMPG). Positions 54–80 (TSVIRLQKKVMDLEGRLAEAEKEYISG) form a coiled coil. Positions 77–89 (YISGTPSREKRSP) are enriched in basic and acidic residues. The tract at residues 77-96 (YISGTPSREKRSPTEWIPRP) is disordered. WD repeat units lie at residues 104-145 (GHRA…RTIK), 146-187 (GHTD…RTMH), 188-227 (GHDH…CVRT), 230-269 (GHRD…CKLE), 272-334 (EHDH…ALFT), 337-376 (GHDN…CCKT), and 379-411 (AHSH…WECR).

The protein belongs to the WD repeat LIS1/nudF family.

It localises to the cytoplasm. It is found in the cytoskeleton. Its subcellular location is the microtubule organizing center. The protein resides in the centrosome. Functionally, positively regulates the activity of the minus-end directed microtubule motor protein dynein. May enhance dynein-mediated microtubule sliding by targeting dynein to the microtubule plus end. Required for several dynein- and microtubule-dependent processes. This chain is Lissencephaly-1 homolog, found in Ixodes scapularis (Black-legged tick).